A 114-amino-acid polypeptide reads, in one-letter code: Large ribosomal subunit protein uL22 (114 aa).

Belongs to the universal ribosomal protein uL22 family. Part of the 50S ribosomal subunit.

This protein binds specifically to 23S rRNA; its binding is stimulated by other ribosomal proteins, e.g. L4, L17, and L20. It is important during the early stages of 50S assembly. It makes multiple contacts with different domains of the 23S rRNA in the assembled 50S subunit and ribosome. Its function is as follows. The globular domain of the protein is located near the polypeptide exit tunnel on the outside of the subunit, while an extended beta-hairpin is found that lines the wall of the exit tunnel in the center of the 70S ribosome. In Desulfosudis oleivorans (strain DSM 6200 / JCM 39069 / Hxd3) (Desulfococcus oleovorans), this protein is Large ribosomal subunit protein uL22.